The primary structure comprises 256 residues: Type III pantothenate kinase (256 aa).

6 to 13 contributes to the ATP binding site; sequence DVGNTNMV. Substrate is bound by residues Y100 and 107 to 110; that span reads GADR. The active-site Proton acceptor is the D109. A K(+)-binding site is contributed by D129. T132 provides a ligand contact to ATP. T184 is a binding site for substrate.

Belongs to the type III pantothenate kinase family. As to quaternary structure, homodimer. The cofactor is NH4(+). K(+) is required as a cofactor.

It is found in the cytoplasm. It catalyses the reaction (R)-pantothenate + ATP = (R)-4'-phosphopantothenate + ADP + H(+). Its pathway is cofactor biosynthesis; coenzyme A biosynthesis; CoA from (R)-pantothenate: step 1/5. Its function is as follows. Catalyzes the phosphorylation of pantothenate (Pan), the first step in CoA biosynthesis. This Clostridioides difficile (strain 630) (Peptoclostridium difficile) protein is Type III pantothenate kinase.